Here is a 528-residue protein sequence, read N- to C-terminus: Sphingosine-1-phosphate lyase (528 aa).

The helical transmembrane segment at 13 to 35 (PAKLVLATAGITAASILAYQAIT) threads the bilayer. The residue at position 324 (lysine 324) is an N6-(pyridoxal phosphate)lysine.

It belongs to the group II decarboxylase family. Sphingosine-1-phosphate lyase subfamily. Pyridoxal 5'-phosphate serves as cofactor.

The protein localises to the endoplasmic reticulum membrane. It catalyses the reaction sphinganine 1-phosphate = hexadecanal + phosphoethanolamine. It functions in the pathway lipid metabolism; sphingolipid metabolism. In terms of biological role, cleaves phosphorylated sphingoid bases (PSBs), such as sphingosine-1-phosphate, into fatty aldehydes and phosphoethanolamine. Sphingosine-1-phosphate (S1P) probably acts intracellularly as a second messenger perhaps by promoting cell proliferation; the absence of S1P lyase increases its concentration. This leads to increased lateral pseudopod formation as well as defects in the efficiency of chemotaxis. Overexpression of S1P lyase causes decreased growth rates, entry into stationary phase at lower cell density and increased sensitivity to the antitumor agents cisplatin and carboplatin; these effects are more pronounced in cells that express more enzyme. In Dictyostelium discoideum (Social amoeba), this protein is Sphingosine-1-phosphate lyase (sglA).